The chain runs to 280 residues: MDVGAKEEEMGQVWWGHRAWSLLSAVRARAPLVQCITNLVSMDIAANVLLAAGASPAMVHSLREVPDFTPRCDAVYVNVGTLSEDWLPSMRAAASAGRPWVLDPVAAAASGFRMKACLELLSLCPAVVRGNASEILALASRSTAASSNFKGVDSSHCSVDAIEAAKALALSSSAVVAVSGAVDFVTDGKQVISVSNGVPMMQKITATGCAVTALIAAFVAMEPSDAIVAAACALAIFGLVGEIGMESAKGPASLRMHLIDALYCLNEETVTSRVRISLRP.

M58 provides a ligand contact to substrate. R129 is a binding site for ATP. Position 206 (A206) interacts with substrate.

The protein belongs to the Thz kinase family. Requires Mg(2+) as cofactor.

The enzyme catalyses 5-(2-hydroxyethyl)-4-methylthiazole + ATP = 4-methyl-5-(2-phosphooxyethyl)-thiazole + ADP + H(+). It functions in the pathway cofactor biosynthesis; thiamine diphosphate biosynthesis; 4-methyl-5-(2-phosphoethyl)-thiazole from 5-(2-hydroxyethyl)-4-methylthiazole: step 1/1. In terms of biological role, thiazole kinase involved in thiamine salvage pathway. This is Hydroxyethylthiazole kinase (THIM) from Zea mays (Maize).